Consider the following 449-residue polypeptide: Tubulin alpha chain (449 aa).

Residues Gln-11, Glu-71, Ser-140, Gly-144, Thr-145, Thr-179, Asn-206, and Asn-228 each contribute to the GTP site. Position 71 (Glu-71) interacts with Mg(2+). The active site involves Glu-254.

Belongs to the tubulin family. Dimer of alpha and beta chains. A typical microtubule is a hollow water-filled tube with an outer diameter of 25 nm and an inner diameter of 15 nM. Alpha-beta heterodimers associate head-to-tail to form protofilaments running lengthwise along the microtubule wall with the beta-tubulin subunit facing the microtubule plus end conferring a structural polarity. Microtubules usually have 13 protofilaments but different protofilament numbers can be found in some organisms and specialized cells. Mg(2+) is required as a cofactor.

The protein resides in the cytoplasm. The protein localises to the cytoskeleton. It carries out the reaction GTP + H2O = GDP + phosphate + H(+). Tubulin is the major constituent of microtubules, a cylinder consisting of laterally associated linear protofilaments composed of alpha- and beta-tubulin heterodimers. Microtubules grow by the addition of GTP-tubulin dimers to the microtubule end, where a stabilizing cap forms. Below the cap, tubulin dimers are in GDP-bound state, owing to GTPase activity of alpha-tubulin. The polypeptide is Tubulin alpha chain (TUB1) (Pneumocystis carinii).